The sequence spans 389 residues: Putative F-box protein At1g47790 (389 aa).

An F-box domain is found at 19-65; sequence SKPTSSFPLDLASEILLRLPVKSVVRFRCVSKLWSSIITDPYFIKTY.

This Arabidopsis thaliana (Mouse-ear cress) protein is Putative F-box protein At1g47790.